A 430-amino-acid chain; its full sequence is Sphingosine-1-phosphate phosphatase 1 (430 aa).

The segment at 34–100 (GSPKAGEDAE…PRRAGSLRRN (67 aa)) is disordered. S101 bears the Phosphoserine mark. The residue at position 103 (T103) is a Phosphothreonine. 4 helical membrane passes run 121-141 (FCFG…PFWI), 152-172 (LVII…IIRW), 193-213 (MPST…LLTY), and 216-236 (WQYP…LVCL). Residues 167-175 (KDIIRWPRP) form a phosphatase sequence motif I region. Residues 194–197 (PSTH) are phosphatase sequence motif II. H197 acts as the Proton donor in catalysis. Residues 237–248 (SRIYMGMHSILD) are phosphatase sequence motif III. H244 serves as the catalytic Nucleophile. 5 consecutive transmembrane segments (helical) span residues 246-266 (ILDV…FYPL), 279-299 (YAPL…FTLD), 311-331 (ILGS…LGIS), 348-368 (VTLF…VLFV), and 409-429 (YGTV…FIGI).

Belongs to the type 2 lipid phosphate phosphatase family.

The protein resides in the endoplasmic reticulum membrane. Its subcellular location is the cell membrane. The catalysed reaction is sphinganine 1-phosphate + H2O = sphinganine + phosphate. It carries out the reaction sphing-4-enine 1-phosphate + H2O = sphing-4-enine + phosphate. Specifically dephosphorylates sphingosine 1-phosphate (S1P), dihydro-S1P, and phyto-S1P. Does not act on ceramide 1-phosphate, lysophosphatidic acid or phosphatidic acid. Sphingosine-1-phosphate phosphatase activity is needed for efficient recycling of sphingosine into the sphingolipid synthesis pathway. Regulates the intracellular levels of the bioactive sphingolipid metabolite S1P that regulates diverse biological processes acting both as an extracellular receptor ligand or as an intracellular second messenger. Involved in efficient ceramide synthesis from exogenous sphingoid bases. Converts S1P to sphingosine, which is readily metabolized to ceramide via ceramide synthase. In concert with sphingosine kinase 2 (SphK2), recycles sphingosine into ceramide through a phosphorylation/dephosphorylation cycle. Regulates endoplasmic-to-Golgi trafficking of ceramides, resulting in the regulation of ceramide levels in the endoplasmic reticulum, preferentially long-chain ceramide species, and influences the anterograde membrane transport of both ceramide and proteins from the endoplasmic reticulum to the Golgi apparatus. The modulation of intracellular ceramide levels in turn regulates apoptosis. Via S1P levels, modulates resting tone, intracellular Ca(2+) and myogenic vasoconstriction in resistance arteries. Also involved in unfolded protein response (UPR) and ER stress-induced autophagy via regulation of intracellular S1P levels. Involved in the regulation of epidermal homeostasis and keratinocyte differentiation. This Rattus norvegicus (Rat) protein is Sphingosine-1-phosphate phosphatase 1.